Consider the following 37-residue polypeptide: Bactericidin B-3 (37 aa).

G37 carries the post-translational modification Glycine amide.

Belongs to the cecropin family.

Its subcellular location is the secreted. Cecropins have lytic and antibacterial activity against several Gram-positive and Gram-negative bacteria. The polypeptide is Bactericidin B-3 (Manduca sexta (Tobacco hawkmoth)).